The primary structure comprises 466 residues: Light-independent protochlorophyllide reductase subunit N (466 aa).

[4Fe-4S] cluster-binding residues include cysteine 23, cysteine 48, and cysteine 108.

This sequence belongs to the BchN/ChlN family. Protochlorophyllide reductase is composed of three subunits; ChlL, ChlN and ChlB. Forms a heterotetramer of two ChlB and two ChlN subunits. [4Fe-4S] cluster serves as cofactor.

The catalysed reaction is chlorophyllide a + oxidized 2[4Fe-4S]-[ferredoxin] + 2 ADP + 2 phosphate = protochlorophyllide a + reduced 2[4Fe-4S]-[ferredoxin] + 2 ATP + 2 H2O. It functions in the pathway porphyrin-containing compound metabolism; chlorophyll biosynthesis (light-independent). Functionally, component of the dark-operative protochlorophyllide reductase (DPOR) that uses Mg-ATP and reduced ferredoxin to reduce ring D of protochlorophyllide (Pchlide) to form chlorophyllide a (Chlide). This reaction is light-independent. The NB-protein (ChlN-ChlB) is the catalytic component of the complex. This chain is Light-independent protochlorophyllide reductase subunit N, found in Synechococcus elongatus (strain ATCC 33912 / PCC 7942 / FACHB-805) (Anacystis nidulans R2).